A 510-amino-acid polypeptide reads, in one-letter code: UDP-galactopyranose mutase (510 aa).

Positions 18, 38, 46, and 61 each coordinate FAD. Residues Gly61 and Gly62 each contribute to the UDP-alpha-D-galactose site. Residue His63 coordinates FAD. NADH-binding residues include His68, Arg91, and Ser93. Residues His68, Arg91, Ser93, and Tyr104 each contribute to the NADPH site. UDP-alpha-D-galactose-binding residues include Tyr104, Gln107, Met159, Tyr162, Asn163, Trp167, and Arg182. Asn203 provides a ligand contact to NADPH. Asn207 contacts UDP-alpha-D-galactose. Residue Val242 participates in FAD binding. NADPH is bound by residues Trp315 and Tyr317. Residues Tyr317, Arg327, and Tyr419 each coordinate UDP-alpha-D-galactose. Arg327 contacts FAD. 2 residues coordinate NADH: Tyr419 and Arg447. 2 residues coordinate NADPH: Tyr419 and Arg447. Arg447 is an FAD binding site. Residue Tyr453 coordinates UDP-alpha-D-galactose. FAD is bound by residues Gly456, Asn457, and Gln458. UDP-alpha-D-galactose is bound at residue Asn457. Asn457 contributes to the NADH binding site. Asn457 contacts NADPH. His460 serves as a coordination point for NADPH. Residue Ser461 coordinates FAD.

The protein belongs to the UDP-galactopyranose/dTDP-fucopyranose mutase family. As to quaternary structure, homotetramer. FAD serves as cofactor.

The enzyme catalyses UDP-alpha-D-galactose = UDP-alpha-D-galactofuranose. In terms of biological role, UDP-galactopyranose mutase, key flavoenzyme of galactofuranose metabolism that catalyzes the 6-to-5 ring contraction of UDP-galactopyranose to UDP-galactofuranose, the donor used by various galacto-furanosyltransferases. Controls the biosynthesis of galactomannan and galactofuranose containing glycoconjugates. The flavin functions as nucleophile, forming a flavin-sugar adduct that facilitates galactose-ring opening and contraction. The binding of UDP-galactopyranose induces profound conformational changes in the enzyme and two loops on opposite sides of the active site move toward each other by over 10 Angstroms to cover the substrate and create a closed active site. The polypeptide is UDP-galactopyranose mutase (Aspergillus fumigatus (Neosartorya fumigata)).